The following is a 929-amino-acid chain: MEPWDPPQLPPVRHSHAAGSGRAEGRHGTPPPWRPIISGPLPRPGSWDPGRDLHRPASQAESYESGHAFRAYSRQGYEDPHWQYPGAAYRDNHAYQSHQWQPTAWQGNRDVTQVKPHGKSTTYRDQHYYRGYHPNLAASPLGQDRSQTYDAYKEGSRRSWAGVSNLGEASGQPQQPSLLQQYRESGLSSSGYELSQYIRDGAEPNDTAFLGGWSPVQGGGPLESAVMAPHKFLQPHVPVCLGAGGQLVLVCPHRPTEGQLPLVELHSLEVILQGTTDQEELQAFPGPLAREDLHKVDVMTFCQQKIASSCDLSTQRGRDSALLWKLLVLLCRQNGSMVGSDVAELLMQDCRQQERYKRQEPAVGPVSLADEEWRQLGTLDLITGEVPPVVETQAQIVEKFTKLLYYGRKKDALVWAMRNQLWGHALFLSSKMDPRTYSWVLSGFTSTLATNDPLQTFFQLMSGRIPQAAQSCGDAKWGDWRPHLAVLLSNKVGDMELNHRAIVTMGDTLAGKGAVEAAHFCYLMADIPFGYFGVKADRMALLGSSHRQAFTQFATKEAIQRMEIFEYCQQLRHPTSFLLPFQVYKLLYASRLADHGLPAQALLYCEQIATVLLQQDPTSHPVLAQQLTKLAERLKLCDPLLLLEMPEQDPVLEPQWLLQLRTYCQHCQVQDDLAPEVALTQPEPWDTTATPGREMVHEQPHSDGPHDEQWHQPPVPLQGPDPHQDVSIPPLEVAVLGVGPISQEELCTEPSLQAVPTAGDAEEPQDAHGVQQPVLAELQELSTRARSASESSTASLEEDSQTSSDSPAEELEGTSEDKSFGFRWFGWFRSKPQKETSPKATTSGSPTPGLQDRRSPSPPGAVPSAQPPASPSPYRNPVSIDMKGPWDADGHEPLPGMVPLFNPAQVSQLAAARPTQPRLLSQRRYPNPL.

Over residues 1–10 the composition is skewed to pro residues; sequence MEPWDPPQLP. The disordered stretch occupies residues 1–64; the sequence is MEPWDPPQLP…RPASQAESYE (64 aa). Residues 228 to 669 are central conserved domain (CCD); required for localization to endoplasmic reticulum exit sites; that stretch reads APHKFLQPHV…LRTYCQHCQV (442 aa). Disordered stretches follow at residues 675–727 and 781–929; these read PEVA…QDVS and LSTR…PNPL. Residues 694–710 are compositionally biased toward basic and acidic residues; that stretch reads EMVHEQPHSDGPHDEQW. Over residues 781 to 795 the composition is skewed to low complexity; it reads LSTRARSASESSTAS. Over residues 838 to 848 the composition is skewed to polar residues; it reads PKATTSGSPTP. Residues 856 to 871 show a composition bias toward pro residues; that stretch reads PSPPGAVPSAQPPASP.

The protein belongs to the SEC16 family. As to quaternary structure, SEC16A and SEC16B are each present in multiple copies in a heteromeric complex.

The protein resides in the endoplasmic reticulum membrane. It is found in the golgi apparatus membrane. Plays a role in the organization of the endoplasmic reticulum exit sites (ERES), also known as transitional endoplasmic reticulum (tER). Required for secretory cargo traffic from the endoplasmic reticulum to the Golgi apparatus. Involved in peroxisome biogenesis. Regulates the transport of peroxisomal biogenesis factors PEX3 and PEX16 from the ER to peroxisomes. The chain is Protein transport protein Sec16B (SEC16B) from Gallus gallus (Chicken).